The chain runs to 58 residues: Galectin-1 (58 aa).

A Galectin domain is found at 2-58; sequence GITXTSLHVAPGARLAVKGDIPAGAKSWVINLGKGENDIMLHFNARFDAHGDIRTIV. A beta-D-galactoside-binding positions include 43–47 and His-51; that span reads HFNAR.

As to quaternary structure, monomer. As to expression, detected in most tissues, most abundantly in skin.

It localises to the secreted. It is found in the extracellular space. The protein resides in the extracellular matrix. In terms of biological role, may regulate cell apoptosis and cell differentiation. Binds beta-galactoside and a wide array of complex carbohydrates. This is Galectin-1 from Podarcis hispanicus (Iberian wall lizard).